A 219-amino-acid chain; its full sequence is Pyridoxine/pyridoxamine 5'-phosphate oxidase (219 aa).

Residues 15-18 (RRDY) and Lys73 each bind substrate. FMN contacts are provided by residues 68 to 73 (RMVLLK), 83 to 84 (YT), Arg89, Lys90, and Gln112. Substrate is bound by residues Tyr130, Arg134, and Ser138. Residues 147–148 (QS) and Trp192 each bind FMN. 198–200 (RLH) contacts substrate. Residue Arg202 participates in FMN binding.

Belongs to the pyridoxamine 5'-phosphate oxidase family. As to quaternary structure, homodimer. The cofactor is FMN.

The enzyme catalyses pyridoxamine 5'-phosphate + O2 + H2O = pyridoxal 5'-phosphate + H2O2 + NH4(+). It carries out the reaction pyridoxine 5'-phosphate + O2 = pyridoxal 5'-phosphate + H2O2. Its pathway is cofactor metabolism; pyridoxal 5'-phosphate salvage; pyridoxal 5'-phosphate from pyridoxamine 5'-phosphate: step 1/1. It participates in cofactor metabolism; pyridoxal 5'-phosphate salvage; pyridoxal 5'-phosphate from pyridoxine 5'-phosphate: step 1/1. Its function is as follows. Catalyzes the oxidation of either pyridoxine 5'-phosphate (PNP) or pyridoxamine 5'-phosphate (PMP) into pyridoxal 5'-phosphate (PLP). The polypeptide is Pyridoxine/pyridoxamine 5'-phosphate oxidase (Acaryochloris marina (strain MBIC 11017)).